The primary structure comprises 472 residues: ATP-dependent rRNA helicase rrp3 (472 aa).

The disordered stretch occupies residues 1–51 (MPDVKKRKIAHEAPEHGSDAESTSSHESVAQQDDTAETQDEAAATETRPAP). A compositionally biased stretch (basic and acidic residues) spans 10–19 (AHEAPEHGSD). The segment covering 20-29 (AESTSSHESV) has biased composition (polar residues). Positions 52–80 (KSFKDLGIIDQLCEACETMGYKAPTPIQA) match the Q motif motif. Positions 83 to 254 (IPLALQGRDL…RASLSNPLRV (172 aa)) constitute a Helicase ATP-binding domain. Position 96-103 (96-103 (AETGSGKT)) interacts with ATP. Residues 202-205 (DEAD) carry the DEAD box motif. Positions 282 to 426 (YLVYLLNEFV…EYELEKDEVM (145 aa)) constitute a Helicase C-terminal domain. The interval 451-472 (GTKAKKFGKGKRSRDEMDQEEG) is disordered. The segment covering 452 to 462 (TKAKKFGKGKR) has biased composition (basic residues).

It belongs to the DEAD box helicase family. DDX47/RRP3 subfamily. In terms of assembly, interacts with the SSU processome.

The protein localises to the nucleus. It catalyses the reaction ATP + H2O = ADP + phosphate + H(+). In terms of biological role, ATP-dependent rRNA helicase required for pre-ribosomal RNA processing. Involved in the maturation of the 35S-pre-rRNA and to its cleavage to mature 18S rRNA. In Neosartorya fischeri (strain ATCC 1020 / DSM 3700 / CBS 544.65 / FGSC A1164 / JCM 1740 / NRRL 181 / WB 181) (Aspergillus fischerianus), this protein is ATP-dependent rRNA helicase rrp3.